The sequence spans 297 residues: Cbb3-type cytochrome c oxidase subunit CcoP (297 aa).

At 1–35 (MSKKPTTKKEVQTTGHSWDGIEELNTPLPRWWLWT) the chain is on the cytoplasmic side. Residues 36-56 (FYATIVWGVAYSIAMPAWPIF) traverse the membrane as a helical segment. Topologically, residues 57–297 (ASGATPGILG…SYVHSLGGGQ (241 aa)) are periplasmic. 2 Cytochrome c domains span residues 108-199 (YTRN…LKIS) and 206-294 (ARAT…HSLG). 8 residues coordinate heme c: Cys-121, Cys-124, His-125, Met-174, Cys-219, Cys-222, His-223, and Met-264.

It belongs to the CcoP / FixP family. In terms of assembly, component of the cbb3-type cytochrome c oxidase at least composed of CcoN, CcoO, CcoQ and CcoP. Interacts with CcoH (via transmembrane domain). The cofactor is heme c.

It localises to the cell inner membrane. Its pathway is energy metabolism; oxidative phosphorylation. C-type cytochrome. Part of the cbb3-type cytochrome c oxidase complex. CcoP subunit is required for transferring electrons from donor cytochrome c via its heme groups to CcoO subunit. From there, electrons are shuttled to the catalytic binuclear center of CcoN subunit where oxygen reduction takes place. The complex also functions as a proton pump. The sequence is that of Cbb3-type cytochrome c oxidase subunit CcoP from Rhodobacter capsulatus (strain ATCC BAA-309 / NBRC 16581 / SB1003).